The following is a 395-amino-acid chain: Flap endonuclease 1 (395 aa).

Positions 1–104 (MGIKHLYQVI…GELAKRTARK (104 aa)) are N-domain. Residue D34 coordinates Mg(2+). DNA-binding residues include R47 and R70. D86 is a binding site for Mg(2+). Residues 102-121 (ARKAEATEAHEEAKETGTAE) form a disordered region. Residues 122 to 253 (DVEKFSRRTV…NTALKLIREF (132 aa)) form an I-domain region. Residues E158, E160, D179, and D181 each coordinate Mg(2+). E158 contributes to the DNA binding site. Residues G231 and D233 each contribute to the DNA site. D233 provides a ligand contact to Mg(2+). Residues 341–349 (QQSRLEGFF) are interaction with PCNA. Residues 348-395 (FFKPVARTDEEKANLKRKHDEKLQEQKKRKKEEAKAKKEAKARPRGAG) form a disordered region. A compositionally biased stretch (basic and acidic residues) spans 353 to 389 (ARTDEEKANLKRKHDEKLQEQKKRKKEEAKAKKEAKA).

This sequence belongs to the XPG/RAD2 endonuclease family. FEN1 subfamily. In terms of assembly, interacts with PCNA. Three molecules of fen1 bind to one PCNA trimer with each molecule binding to one PCNA monomer. PCNA stimulates the nuclease activity without altering cleavage specificity. It depends on Mg(2+) as a cofactor. Post-translationally, phosphorylated. Phosphorylation upon DNA damage induces relocalization to the nuclear plasma.

It is found in the nucleus. Its subcellular location is the nucleolus. The protein localises to the nucleoplasm. The protein resides in the mitochondrion. Its function is as follows. Structure-specific nuclease with 5'-flap endonuclease and 5'-3' exonuclease activities involved in DNA replication and repair. During DNA replication, cleaves the 5'-overhanging flap structure that is generated by displacement synthesis when DNA polymerase encounters the 5'-end of a downstream Okazaki fragment. It enters the flap from the 5'-end and then tracks to cleave the flap base, leaving a nick for ligation. Also involved in the long patch base excision repair (LP-BER) pathway, by cleaving within the apurinic/apyrimidinic (AP) site-terminated flap. Acts as a genome stabilization factor that prevents flaps from equilibrating into structures that lead to duplications and deletions. Also possesses 5'-3' exonuclease activity on nicked or gapped double-stranded DNA, and exhibits RNase H activity. Also involved in replication and repair of rDNA and in repairing mitochondrial DNA. This is Flap endonuclease 1 (fen1) from Aspergillus flavus (strain ATCC 200026 / FGSC A1120 / IAM 13836 / NRRL 3357 / JCM 12722 / SRRC 167).